Reading from the N-terminus, the 869-residue chain is Bifunctional uridylyltransferase/uridylyl-removing enzyme (869 aa).

Residues 1–332 (MTATPADRPD…QFDGEAVPVQ (332 aa)) form a uridylyltransferase region. The segment at 333-691 (LDAGFSLRRG…RRAVPDNDAL (359 aa)) is uridylyl-removing. Residues 450–572 (VDQHTLMVLR…VGTRERLDYL (123 aa)) enclose the HD domain. ACT domains follow at residues 692 to 771 (EVFV…PSRR) and 798 to 869 (RISL…LDPT).

Belongs to the GlnD family. Mg(2+) serves as cofactor.

It catalyses the reaction [protein-PII]-L-tyrosine + UTP = [protein-PII]-uridylyl-L-tyrosine + diphosphate. The enzyme catalyses [protein-PII]-uridylyl-L-tyrosine + H2O = [protein-PII]-L-tyrosine + UMP + H(+). Uridylyltransferase (UTase) activity is inhibited by glutamine, while glutamine activates uridylyl-removing (UR) activity. Its function is as follows. Modifies, by uridylylation and deuridylylation, the PII regulatory proteins (GlnB and homologs), in response to the nitrogen status of the cell that GlnD senses through the glutamine level. Under low glutamine levels, catalyzes the conversion of the PII proteins and UTP to PII-UMP and PPi, while under higher glutamine levels, GlnD hydrolyzes PII-UMP to PII and UMP (deuridylylation). Thus, controls uridylylation state and activity of the PII proteins, and plays an important role in the regulation of nitrogen assimilation and metabolism. This is Bifunctional uridylyltransferase/uridylyl-removing enzyme from Xanthomonas campestris pv. campestris (strain 8004).